The sequence spans 316 residues: uncharacterized protein (316 aa).

The protein belongs to the chlamydial CPn_0441/CT_007/TC_0275 family.

This is an uncharacterized protein from Chlamydia muridarum (strain MoPn / Nigg).